The primary structure comprises 180 residues: MRIVVGISGASGIPYAVRFLENLRGHDTYLVISEAAKKVIQYESDENIEYIRSLASHNYEDDDFSAPISSGSFLFDSMVIVPCSITTISKIAAGISDTLITRAAAVSLKERRRLIVVPREMPLSTIDLKNMTYLSENGVIVAPASPGFYTKPKSVDDMVAFVVSRILDLVGVGNDLIKRW.

Residues 9 to 11 (GAS), S33, 84 to 87 (SITT), and R119 contribute to the FMN site. Y149 and R165 together coordinate dimethylallyl phosphate.

The protein belongs to the UbiX/PAD1 family.

The catalysed reaction is dimethylallyl phosphate + FMNH2 = prenylated FMNH2 + phosphate. Its function is as follows. Flavin prenyltransferase that catalyzes the synthesis of the prenylated FMN cofactor (prenyl-FMN) for 4-hydroxy-3-polyprenylbenzoic acid decarboxylase UbiD. The prenyltransferase is metal-independent and links a dimethylallyl moiety from dimethylallyl monophosphate (DMAP) to the flavin N5 and C6 atoms of FMN. This chain is Flavin prenyltransferase UbiX, found in Thermoplasma acidophilum (strain ATCC 25905 / DSM 1728 / JCM 9062 / NBRC 15155 / AMRC-C165).